The sequence spans 87 residues: Small ribosomal subunit protein bS20 (87 aa).

Positions 1-19 are enriched in basic residues; it reads MANHKSALKRHRQSIKRNL. The interval 1 to 22 is disordered; that stretch reads MANHKSALKRHRQSIKRNLRNN.

It belongs to the bacterial ribosomal protein bS20 family.

Functionally, binds directly to 16S ribosomal RNA. This Maridesulfovibrio salexigens (strain ATCC 14822 / DSM 2638 / NCIMB 8403 / VKM B-1763) (Desulfovibrio salexigens) protein is Small ribosomal subunit protein bS20.